A 401-amino-acid chain; its full sequence is Acetate kinase (401 aa).

A Mg(2+)-binding site is contributed by N7. An ATP-binding site is contributed by K14. Substrate is bound at residue R96. D153 acts as the Proton donor/acceptor in catalysis. ATP contacts are provided by residues 212 to 216 (HLGNG), 287 to 289 (DMR), and 335 to 339 (GIGEN). E388 lines the Mg(2+) pocket.

The protein belongs to the acetokinase family. As to quaternary structure, homodimer. Requires Mg(2+) as cofactor. It depends on Mn(2+) as a cofactor.

Its subcellular location is the cytoplasm. It catalyses the reaction acetate + ATP = acetyl phosphate + ADP. It functions in the pathway metabolic intermediate biosynthesis; acetyl-CoA biosynthesis; acetyl-CoA from acetate: step 1/2. Catalyzes the formation of acetyl phosphate from acetate and ATP. Can also catalyze the reverse reaction. The polypeptide is Acetate kinase (Microcystis aeruginosa (strain NIES-843 / IAM M-2473)).